The following is a 197-amino-acid chain: UPF0251 protein CT1277 (197 aa).

The disordered stretch occupies residues 138-197 (GGGFGGGRRGGGKCRGFRSGLDRGPGHGEGRCQGEGHGNGNGNGNGQGRMRRNQQEGGEV). The segment covering 157 to 171 (GLDRGPGHGEGRCQG) has biased composition (basic and acidic residues). A compositionally biased stretch (gly residues) spans 172 to 184 (EGHGNGNGNGNGQ).

It belongs to the UPF0251 family.

This chain is UPF0251 protein CT1277, found in Chlorobaculum tepidum (strain ATCC 49652 / DSM 12025 / NBRC 103806 / TLS) (Chlorobium tepidum).